Consider the following 375-residue polypeptide: uncharacterized protein (375 aa).

It belongs to the IMPDH/GMPR family.

This is an uncharacterized protein from Mycobacterium leprae (strain TN).